Here is a 177-residue protein sequence, read N- to C-terminus: Protein GrpE (177 aa).

Belongs to the GrpE family. Homodimer.

It localises to the cytoplasm. Participates actively in the response to hyperosmotic and heat shock by preventing the aggregation of stress-denatured proteins, in association with DnaK and GrpE. It is the nucleotide exchange factor for DnaK and may function as a thermosensor. Unfolded proteins bind initially to DnaJ; upon interaction with the DnaJ-bound protein, DnaK hydrolyzes its bound ATP, resulting in the formation of a stable complex. GrpE releases ADP from DnaK; ATP binding to DnaK triggers the release of the substrate protein, thus completing the reaction cycle. Several rounds of ATP-dependent interactions between DnaJ, DnaK and GrpE are required for fully efficient folding. The polypeptide is Protein GrpE (Thermus thermophilus (strain ATCC BAA-163 / DSM 7039 / HB27)).